Consider the following 1269-residue polypeptide: Protein strawberry notch homolog 1 (1269 aa).

The segment at 21–47 is disordered; the sequence is NDLFDVDGGDAGLATPTPPSVQQQQPP. Residue Lys-113 is modified to N6-acetyllysine. Phosphoserine is present on residues Ser-126 and Ser-178. An N6-acetyllysine modification is found at Lys-377. A disordered region spans residues 652–725; sequence PSNNSSPRDS…SLITSQDAVE (74 aa). A phosphoserine mark is found at Ser-656, Ser-657, and Ser-661. The segment covering 679–693 has biased composition (acidic residues); sequence SGSESDVSDNEESDY. Ser-700 and Ser-701 each carry phosphoserine. A coiled-coil region spans residues 719–746; the sequence is TSQDAVERAQQMKKDLLDKLEKLAEDLP. Lys-1098 carries the N6-acetyllysine modification. Ser-1262 is modified (phosphoserine).

Belongs to the SBNO family.

Its subcellular location is the nucleus. Plays a crucial role in the regulation of neural stem cells (NSCs) proliferation. Enhances the phosphorylation of GSK3B through the PI3K-Akt signaling pathway, thereby upregulating the Wnt/beta-catenin signaling pathway and promoting the proliferation of NSCs. Improves ischemic stroke recovery while inhibiting neuroinflammation through small extracellular vesicles (sEVs)-mediated mechanism. Enhances the secretion of sEVs from NSCs, which in turn inhibit both the MAPK and NF-kappaB pathways in microglia. This inhibition suppresses the pro-inflammatory M1 polarization of microglia, promoting a shift towards the M2 anti-inflammatory phenotype, which is beneficial for reducing neuroinflammation. In Rattus norvegicus (Rat), this protein is Protein strawberry notch homolog 1 (Sbno1).